The chain runs to 373 residues: P2Y purinoceptor 1 (373 aa).

Residues 1-51 (MTEVLWPAAPNGTDAAFLASPGFHWGNSTATSTAAAAAPFRCALTKTGFQF) lie on the Extracellular side of the membrane. N-linked (GlcNAc...) asparagine glycans are attached at residues N11 and N27. 2 cysteine pairs are disulfide-bonded: C42/C296 and C124/C202. K46 is an ADP binding site. Residues 52–74 (YYLPAVYIVVFIIGFLGNSIAIW) form a helical membrane-spanning segment. Residues 75–87 (MFVFHMKPWSGIS) are Cytoplasmic-facing. A helical membrane pass occupies residues 88–109 (VYMFNLALADFLYVLTLPALIF). Topologically, residues 110–125 (YYFNKTNWIFGDAMCK) are extracellular. The N-linked (GlcNAc...) asparagine glycan is linked to N113. The chain crosses the membrane as a helical span at residues 126–147 (LQRFIFHVNLYGSILFLTCISA). Residues 148 to 166 (HRYSGVVYPLKSLGRLKKK) lie on the Cytoplasmic side of the membrane. A helical membrane pass occupies residues 167-188 (NAVYISVLVWLIVVVAISPILF). Residues 189 to 214 (YSGTGIRKNKTITCYDTTSDEYLRSY) lie on the Extracellular side of the membrane. N197 carries an N-linked (GlcNAc...) asparagine glycan. ADP is bound at residue 203–205 (YDT). Residues 215 to 237 (FIYSMCTTVAMFCVPLVLILGCY) traverse the membrane as a helical segment. The Cytoplasmic portion of the chain corresponds to 238 to 260 (GLIVRALIYKDLDNSPLRRKSIY). The helical transmembrane segment at 261–284 (LVIIVLTVFAVSYIPFHVMKTMNL) threads the bilayer. ADP contacts are provided by residues 283-287 (NLRAR), 303-306 (YATY), and R310. The Extracellular segment spans residues 285 to 303 (RARLDFQTPEMCTFNDRVY). The chain crosses the membrane as a helical span at residues 304–325 (ATYQVTRGLASLNSCVDPILYF). The Cytoplasmic portion of the chain corresponds to 326-373 (LAGDTFRRRLSRATRKASRRSEANLQSKSEDMTLNILSEFKQNGDTSL).

The protein belongs to the G-protein coupled receptor 1 family.

The protein localises to the cell membrane. Functionally, receptor for extracellular adenine nucleotides such as ADP. In platelets, binding to ADP leads to mobilization of intracellular calcium ions via activation of phospholipase C, a change in platelet shape, and ultimately platelet aggregation. The polypeptide is P2Y purinoceptor 1 (P2RY1) (Cavia porcellus (Guinea pig)).